A 30-amino-acid chain; its full sequence is MIYDSQIYTVLCIALLAGILAIRLGSTLYE.

Residues 7 to 29 (IYTVLCIALLAGILAIRLGSTLY) traverse the membrane as a helical segment.

The protein belongs to the PsaM family.

Its subcellular location is the plastid. The protein resides in the chloroplast thylakoid membrane. This Phaeodactylum tricornutum (strain CCAP 1055/1) protein is Photosystem I reaction center subunit XII.